We begin with the raw amino-acid sequence, 382 residues long: Mannitol-1-phosphate 5-dehydrogenase (382 aa).

3–14 (ALHFGAGNIGRG) contributes to the NAD(+) binding site.

It belongs to the mannitol dehydrogenase family.

It catalyses the reaction D-mannitol 1-phosphate + NAD(+) = beta-D-fructose 6-phosphate + NADH + H(+). In Salmonella typhi, this protein is Mannitol-1-phosphate 5-dehydrogenase.